We begin with the raw amino-acid sequence, 353 residues long: Peptide-N(4)-(N-acetyl-beta-glucosaminyl)asparagine amidase (353 aa).

The Zn(2+) site is built by cysteine 125, cysteine 128, and cysteine 159. The active-site Nucleophile is cysteine 185. Catalysis depends on residues histidine 212 and aspartate 229. A substrate-binding site is contributed by glutamate 232. Residues 316–353 (SLEKTKPSKDTSTTTLTGTKGRESGSTAWKQQRGEDGS) are disordered. The segment covering 325 to 334 (DTSTTTLTGT) has biased composition (low complexity).

The protein belongs to the transglutaminase-like superfamily. PNGase family. Zn(2+) is required as a cofactor.

Its subcellular location is the cytoplasm. It carries out the reaction Hydrolysis of an N(4)-(acetyl-beta-D-glucosaminyl)asparagine residue in which the glucosamine residue may be further glycosylated, to yield a (substituted) N-acetyl-beta-D-glucosaminylamine and a peptide containing an aspartate residue.. Specifically deglycosylates the denatured form of N-linked glycoproteins in the cytoplasm and assists their proteasome-mediated degradation. Cleaves the beta-aspartyl-glucosamine (GlcNAc) of the glycan and the amide side chain of Asn, converting Asn to Asp. Prefers proteins containing high-mannose over those bearing complex type oligosaccharides. Can recognize misfolded proteins in the endoplasmic reticulum that are exported to the cytosol to be destroyed and deglycosylate them, while it has no activity toward native proteins. Deglycosylation is a prerequisite for subsequent proteasome-mediated degradation of some, but not all, misfolded glycoproteins. The protein is Peptide-N(4)-(N-acetyl-beta-glucosaminyl)asparagine amidase (PNG1) of Kluyveromyces lactis (strain ATCC 8585 / CBS 2359 / DSM 70799 / NBRC 1267 / NRRL Y-1140 / WM37) (Yeast).